A 116-amino-acid polypeptide reads, in one-letter code: Spexin (116 aa).

The first 26 residues, 1–26 (MKGPSVLAVTAVVLLLVLSALENSSG), serve as a signal peptide directing secretion. Residues 27-35 (APQRLSEKR) constitute a propeptide that is removed on maturation. At Gln-49 the chain carries Glutamine amide. 2 propeptides span residues 50–116 (GRRF…LFNW) and 74–116 (PDLE…LFNW). The interval 52 to 77 (RFLSDQSRRKELADRPPPERRNPDLE) is disordered. A compositionally biased stretch (basic and acidic residues) spans 53–75 (FLSDQSRRKELADRPPPERRNPD).

This sequence belongs to the spexin family.

The protein localises to the secreted. It localises to the extracellular space. Its subcellular location is the cytoplasmic vesicle. It is found in the secretory vesicle. Plays a role as a central modulator of cardiovascular and renal function and nociception. Also plays a role in energy metabolism and storage. Inhibits adrenocortical cell proliferation with minor stimulation on corticosteroid release. In terms of biological role, acts as a ligand for galanin receptors GALR2 and GALR3. Intracerebroventricular administration of the peptide induces an increase in arterial blood pressure, a decrease in both heart rate and renal excretion and delayed natriuresis. Intraventricular administration of the peptide induces antinociceptive activity. Also induces contraction of muscarinic-like stomach smooth muscles. Intraperitoneal administration of the peptide induces a reduction in food consumption and body weight. Inhibits long chain fatty acid uptake into adipocytes. Functionally, intracerebroventricular administration of the peptide induces a decrease in heart rate, but no change in arterial pressure, and an increase in urine flow rate. Intraventricular administration of the peptide induces antinociceptive activity. This Mus musculus (Mouse) protein is Spexin (Spx).